A 324-amino-acid polypeptide reads, in one-letter code: Melanoma-associated antigen B16 (324 aa).

A compositionally biased stretch (basic and acidic residues) spans 1 to 15; sequence MSQDQESPRCTHDQH. Disordered stretches follow at residues 1-22 and 39-108; these read MSQD…FSET and LSSS…PRNV. The segment covering 70 to 81 has biased composition (low complexity); the sequence is SSSIAVTTTSSS. The span at 82–95 shows a compositional bias: acidic residues; it reads ESDEASSNQEEEDS. The MAGE domain maps to 113–312; that stretch reads LDQKVAFLVN…HSFPSQYAEA (200 aa).

This chain is Melanoma-associated antigen B16 (MAGEB16), found in Homo sapiens (Human).